Consider the following 304-residue polypeptide: Recombination-associated protein RdgC (304 aa).

It belongs to the RdgC family.

The protein resides in the cytoplasm. It is found in the nucleoid. Its function is as follows. May be involved in recombination. In Shewanella oneidensis (strain ATCC 700550 / JCM 31522 / CIP 106686 / LMG 19005 / NCIMB 14063 / MR-1), this protein is Recombination-associated protein RdgC.